The primary structure comprises 213 residues: Octanoyltransferase (213 aa).

Residues 35 to 213 (DERGDAVLLL…ERHLPTLIEP (179 aa)) enclose the BPL/LPL catalytic domain. Residues 73-80 (RGGKITWH), 145-147 (AIG), and 158-160 (GFS) contribute to the substrate site. Cys176 serves as the catalytic Acyl-thioester intermediate.

It belongs to the LipB family.

Its subcellular location is the cytoplasm. The catalysed reaction is octanoyl-[ACP] + L-lysyl-[protein] = N(6)-octanoyl-L-lysyl-[protein] + holo-[ACP] + H(+). The protein operates within protein modification; protein lipoylation via endogenous pathway; protein N(6)-(lipoyl)lysine from octanoyl-[acyl-carrier-protein]: step 1/2. In terms of biological role, catalyzes the transfer of endogenously produced octanoic acid from octanoyl-acyl-carrier-protein onto the lipoyl domains of lipoate-dependent enzymes. Lipoyl-ACP can also act as a substrate although octanoyl-ACP is likely to be the physiological substrate. This is Octanoyltransferase from Salinispora tropica (strain ATCC BAA-916 / DSM 44818 / JCM 13857 / NBRC 105044 / CNB-440).